A 195-amino-acid polypeptide reads, in one-letter code: Pyridoxal 5'-phosphate synthase subunit PdxT (195 aa).

46–48 (GES) provides a ligand contact to L-glutamine. Cys-78 functions as the Nucleophile in the catalytic mechanism. L-glutamine contacts are provided by residues Arg-107 and 136-137 (IR). Residues His-173 and Glu-175 each act as charge relay system in the active site.

This sequence belongs to the glutaminase PdxT/SNO family. In the presence of PdxS, forms a dodecamer of heterodimers. Only shows activity in the heterodimer.

The enzyme catalyses aldehydo-D-ribose 5-phosphate + D-glyceraldehyde 3-phosphate + L-glutamine = pyridoxal 5'-phosphate + L-glutamate + phosphate + 3 H2O + H(+). The catalysed reaction is L-glutamine + H2O = L-glutamate + NH4(+). It functions in the pathway cofactor biosynthesis; pyridoxal 5'-phosphate biosynthesis. Functionally, catalyzes the hydrolysis of glutamine to glutamate and ammonia as part of the biosynthesis of pyridoxal 5'-phosphate. The resulting ammonia molecule is channeled to the active site of PdxS. This is Pyridoxal 5'-phosphate synthase subunit PdxT from Dehalococcoides mccartyi (strain ATCC BAA-2266 / KCTC 15142 / 195) (Dehalococcoides ethenogenes (strain 195)).